Here is a 270-residue protein sequence, read N- to C-terminus: Tryptophan 2,3-dioxygenase-like protein (270 aa).

The protein belongs to the tryptophan 2,3-dioxygenase family.

The sequence is that of Tryptophan 2,3-dioxygenase-like protein from Xanthomonas campestris pv. campestris (strain 8004).